Consider the following 95-residue polypeptide: Neutrophil antibiotic peptide NP-4 (95 aa).

The first 19 residues, 1 to 19 (MRTLALLAAILLVTLQAQA), serve as a signal peptide directing secretion. Positions 20–62 (ELHSGMADDGVDQQQPRAQDLDVAVYIKQDETSPLEVLGAKAG) are excised as a propeptide. 3 cysteine pairs are disulfide-bonded: Cys65-Cys93, Cys67-Cys82, and Cys72-Cys92.

It belongs to the alpha-defensin family.

Its subcellular location is the secreted. Functionally, microbicidal activity. The chain is Neutrophil antibiotic peptide NP-4 from Oryctolagus cuniculus (Rabbit).